Consider the following 211-residue polypeptide: Thymidylate kinase (211 aa).

Residue Gly-10–Thr-17 coordinates ATP.

Belongs to the thymidylate kinase family.

The catalysed reaction is dTMP + ATP = dTDP + ADP. Functionally, phosphorylation of dTMP to form dTDP in both de novo and salvage pathways of dTTP synthesis. The chain is Thymidylate kinase from Nostoc punctiforme (strain ATCC 29133 / PCC 73102).